We begin with the raw amino-acid sequence, 436 residues long: 3-ketoacyl-CoA thiolase (436 aa).

Cysteine 99 acts as the Acyl-thioester intermediate in catalysis. Residues histidine 392 and cysteine 422 each act as proton acceptor in the active site.

The protein belongs to the thiolase-like superfamily. Thiolase family. Heterotetramer of two alpha chains (FadJ) and two beta chains (FadI).

The protein resides in the cytoplasm. It catalyses the reaction an acyl-CoA + acetyl-CoA = a 3-oxoacyl-CoA + CoA. Its pathway is lipid metabolism; fatty acid beta-oxidation. Catalyzes the final step of fatty acid oxidation in which acetyl-CoA is released and the CoA ester of a fatty acid two carbons shorter is formed. The chain is 3-ketoacyl-CoA thiolase from Shewanella baltica (strain OS185).